A 256-amino-acid polypeptide reads, in one-letter code: POU domain class 2-associating factor 1 (256 aa).

The disordered stretch occupies residues 1 to 23 (MLWQKPTAPEQAPAPPRPYQGVR). The OCA domain maps to 16–38 (PRPYQGVRVKEPVKELLRRKRGH).

This sequence belongs to the POU2AF family. Interacts with POU2F1/OCT1 and POU2F2/OCT2; the interaction increases POU2F1 and POU2F2 transactivation activity. Ubiquitinated; mediated by SIAH1 or SIAH2 and leading to its subsequent proteasomal degradation.

It is found in the nucleus. Its function is as follows. Transcriptional coactivator that specifically associates with either POU2F1/OCT1 or POU2F2/OCT2. It boosts the POU2F1/OCT1 mediated promoter activity and to a lesser extent, that of POU2F2/OCT2. It recognizes the POU domains of POU2F1/OCT1 and POU2F2/OCT2. It is essential for the response of B-cells to antigens and required for the formation of germinal centers. Regulates IL6 expression in B cells as POU2F2/OCT2 coactivator. The protein is POU domain class 2-associating factor 1 (POU2AF1) of Bos taurus (Bovine).